The sequence spans 261 residues: Glucose 1-dehydrogenase (261 aa).

11–35 (AITGAASGLGKAMAIRFGKEQAKVV) is a binding site for NADP(+). Position 145 (S145) interacts with substrate. The active-site Proton acceptor is Y158.

The protein belongs to the short-chain dehydrogenases/reductases (SDR) family. In terms of assembly, homotetramer.

The catalysed reaction is D-glucose + NAD(+) = D-glucono-1,5-lactone + NADH + H(+). It carries out the reaction D-glucose + NADP(+) = D-glucono-1,5-lactone + NADPH + H(+). This chain is Glucose 1-dehydrogenase (gdh), found in Bacillus subtilis (strain 168).